The sequence spans 2039 residues: Calcium-channel protein CCH1 (2039 aa).

2 disordered regions span residues 1 to 171 and 206 to 288; these read MQGR…PPRS and PQLK…PQKE. Over residues 64 to 80 the composition is skewed to basic and acidic residues; sequence STEEKKGDEYNGNDKDS. Asparagine 98 carries an N-linked (GlcNAc...) asparagine glycan. 2 stretches are compositionally biased toward low complexity: residues 122–132 and 147–164; these read SPSTKSAKSSS and FSSY…SPSS. The span at 209-226 shows a compositional bias: basic and acidic residues; the sequence is KSEKSRPVSDVGEDRGEG. Residues asparagine 257 and asparagine 269 are each glycosylated (N-linked (GlcNAc...) asparagine). The span at 271 to 281 shows a compositional bias: basic residues; sequence SRKKPSPKFFH. A Phosphoserine modification is found at serine 284. The helical transmembrane segment at 346–366 threads the bilayer; the sequence is YSLLYNTLLTFYAILLAIRTY. N-linked (GlcNAc...) asparagine glycosylation occurs at asparagine 379. A helical transmembrane segment spans residues 384–404; that stretch reads FIFILSACFTGNDIAKIIAFG. A glycan (N-linked (GlcNAc...) asparagine) is linked at asparagine 559. The next 3 membrane-spanning stretches (helical) occupy residues 563–583, 658–678, and 691–711; these read MLVY…QGSF, IVNS…TDLM, and LFFI…LIAV. N-linked (GlcNAc...) asparagine glycans are attached at residues asparagine 754 and asparagine 760. Helical transmembrane passes span 766–786, 809–829, and 841–861; these read LAIY…DIGM, ISIV…PNMW, and FIIS…VLGH. N-linked (GlcNAc...) asparagine glycans are attached at residues asparagine 882 and asparagine 900. 2 helical membrane passes run 904–924 and 942–962; these read FYFF…EGVI and SFLS…LYAL. An N-linked (GlcNAc...) asparagine glycan is attached at asparagine 968. Residues 978–998 form a helical membrane-spanning segment; that stretch reads FFIIWFLLSNSVILNIFIALI. The N-linked (GlcNAc...) asparagine glycan is linked to asparagine 1153. The chain crosses the membrane as a helical span at residues 1207–1227; sequence VFVFIFALATILLIVCSCYVT. The N-linked (GlcNAc...) asparagine glycan is linked to asparagine 1240. The next 2 helical transmembrane spans lie at 1247–1267 and 1277–1297; these read CAFI…DGFI and PWNF…IAYL. A glycan (N-linked (GlcNAc...) asparagine) is linked at asparagine 1302. A run of 2 helical transmembrane segments spans residues 1340–1360 and 1408–1428; these read IFEA…WGLS and FASA…VDLL. An N-linked (GlcNAc...) asparagine glycan is attached at asparagine 1433. Helical transmembrane passes span 1452–1472, 1529–1549, 1554–1574, 1596–1616, and 1618–1638; these read FLVL…VSFI, NFYY…MLLS, PGNL…VFLI, IRLS…HVPA, and HYWF…FIIP. The N-linked (GlcNAc...) asparagine glycan is linked to asparagine 1640. The helical transmembrane segment at 1654–1674 threads the bilayer; the sequence is LPPILSLTYTWGVLFLVYAIA. N-linked (GlcNAc...) asparagine glycans are attached at residues asparagine 1687 and asparagine 1732. A helical membrane pass occupies residues 1748 to 1768; sequence LMSWNIISMYIFVNMFVSLII. Residues asparagine 1770 and asparagine 1785 are each glycosylated (N-linked (GlcNAc...) asparagine). The EF-hand domain maps to 1787–1822; it reads SEIKKYIEAWSKFDTDGTGELELSYLPRIMHSFDGP. The disordered stretch occupies residues 2011 to 2039; that stretch reads PRMNQDSTMEPPEEPIDNNDDSANDLIDR. Acidic residues predominate over residues 2021-2033; that stretch reads PPEEPIDNNDDSA.

This sequence belongs to the calcium channel alpha-1 subunit (TC 1.A.1.11) family. Interacts with MID1 to form a Ca(2+) influx channel.

Its subcellular location is the cell membrane. Functionally, voltage-gated, high-affinity calcium channel that functions together with MID1 to mediate calcium entry into cells. Required during conditions of environmental stress. This chain is Calcium-channel protein CCH1 (CCH1), found in Saccharomyces cerevisiae (strain ATCC 204508 / S288c) (Baker's yeast).